Here is a 263-residue protein sequence, read N- to C-terminus: Phosphoinositide-3-kinase-interacting protein 1 (263 aa).

The N-terminal stretch at 1–21 (MLLAWVQAFLVSNMLLAEAYG) is a signal peptide. Over 22–168 (SGGCFWDNGH…NSKEKKDLGT (147 aa)) the chain is Extracellular. The Kringle domain occupies 24-101 (GCFWDNGHLY…EKRPCENLSC (78 aa)). 3 disulfides stabilise this stretch: C25/C101, C46/C82, and C70/C96. N98 is a glycosylation site (N-linked (GlcNAc...) asparagine). Residues 169–189 (LGYVLGITMMVIIVAIGAGII) form a helical membrane-spanning segment. The Cytoplasmic segment spans residues 190 to 263 (LGYSYKRGKD…LMGQAGTPGA (74 aa)). The segment covering 242 to 251 (QTPVDPQEGS) has biased composition (polar residues). Positions 242 to 263 (QTPVDPQEGSTPLMGQAGTPGA) are disordered.

It localises to the cell membrane. In terms of biological role, negative regulator of hepatic phosphatidylinositol 3-kinase (PI3K) activity. In Pongo abelii (Sumatran orangutan), this protein is Phosphoinositide-3-kinase-interacting protein 1 (PIK3IP1).